A 154-amino-acid polypeptide reads, in one-letter code: SsrA-binding protein (154 aa).

The tract at residues 134–154 is disordered; the sequence is DKREDIKKRDQERELSRRFKN.

The protein belongs to the SmpB family.

Its subcellular location is the cytoplasm. Its function is as follows. Required for rescue of stalled ribosomes mediated by trans-translation. Binds to transfer-messenger RNA (tmRNA), required for stable association of tmRNA with ribosomes. tmRNA and SmpB together mimic tRNA shape, replacing the anticodon stem-loop with SmpB. tmRNA is encoded by the ssrA gene; the 2 termini fold to resemble tRNA(Ala) and it encodes a 'tag peptide', a short internal open reading frame. During trans-translation Ala-aminoacylated tmRNA acts like a tRNA, entering the A-site of stalled ribosomes, displacing the stalled mRNA. The ribosome then switches to translate the ORF on the tmRNA; the nascent peptide is terminated with the 'tag peptide' encoded by the tmRNA and targeted for degradation. The ribosome is freed to recommence translation, which seems to be the essential function of trans-translation. This is SsrA-binding protein from Leuconostoc mesenteroides subsp. mesenteroides (strain ATCC 8293 / DSM 20343 / BCRC 11652 / CCM 1803 / JCM 6124 / NCDO 523 / NBRC 100496 / NCIMB 8023 / NCTC 12954 / NRRL B-1118 / 37Y).